Reading from the N-terminus, the 360-residue chain is Peptide chain release factor 1 (360 aa).

Q235 bears the N5-methylglutamine mark.

This sequence belongs to the prokaryotic/mitochondrial release factor family. Post-translationally, methylated by PrmC. Methylation increases the termination efficiency of RF1.

The protein localises to the cytoplasm. Functionally, peptide chain release factor 1 directs the termination of translation in response to the peptide chain termination codons UAG and UAA. This Delftia acidovorans (strain DSM 14801 / SPH-1) protein is Peptide chain release factor 1.